The sequence spans 122 residues: Large ribosomal subunit protein uL14 (122 aa).

It belongs to the universal ribosomal protein uL14 family. In terms of assembly, part of the 50S ribosomal subunit. Forms a cluster with proteins L3 and L19. In the 70S ribosome, L14 and L19 interact and together make contacts with the 16S rRNA in bridges B5 and B8.

Functionally, binds to 23S rRNA. Forms part of two intersubunit bridges in the 70S ribosome. This Exiguobacterium sp. (strain ATCC BAA-1283 / AT1b) protein is Large ribosomal subunit protein uL14.